A 104-amino-acid polypeptide reads, in one-letter code: Large ribosomal subunit protein bL21 (104 aa).

The protein belongs to the bacterial ribosomal protein bL21 family. Part of the 50S ribosomal subunit. Contacts protein L20.

Its function is as follows. This protein binds to 23S rRNA in the presence of protein L20. The chain is Large ribosomal subunit protein bL21 from Streptococcus agalactiae serotype Ia (strain ATCC 27591 / A909 / CDC SS700).